A 241-amino-acid chain; its full sequence is Demethylmenaquinone methyltransferase (241 aa).

S-adenosyl-L-methionine is bound by residues Thr-60, Asp-81, and 106 to 107 (DA).

Belongs to the class I-like SAM-binding methyltransferase superfamily. MenG/UbiE family.

The catalysed reaction is a 2-demethylmenaquinol + S-adenosyl-L-methionine = a menaquinol + S-adenosyl-L-homocysteine + H(+). It participates in quinol/quinone metabolism; menaquinone biosynthesis; menaquinol from 1,4-dihydroxy-2-naphthoate: step 2/2. Its function is as follows. Methyltransferase required for the conversion of demethylmenaquinol (DMKH2) to menaquinol (MKH2). This is Demethylmenaquinone methyltransferase from Staphylococcus aureus (strain Mu3 / ATCC 700698).